The sequence spans 1444 residues: Adhesin P1 (1444 aa).

Positions 1–30 (MHQPKKRLAKKSWAFLTAALTLGVITGVGG) are cleaved as a signal peptide. 3 disordered regions span residues 231 to 283 (QSSF…EVER), 845 to 885 (IPFE…ALPN), and 927 to 949 (GDSN…TNEG). Positions 240-257 (LQKDSPVKDSSKQGEKLS) are enriched in basic and acidic residues. A compositionally biased stretch (low complexity) spans 258-272 (ETTASSMSSGMATST). 2 stretches are compositionally biased toward polar residues: residues 851–860 (KPSNNSTPFD) and 868–878 (VTPSGGSSKPT). Basic and acidic residues predominate over residues 933–946 (FNKDSEQKWDKTET). The chain crosses the membrane as a helical span at residues 1353 to 1373 (VLPLIVTVPIVVIILSVTLGL). Residues 1419 to 1444 (NAPKKLKQATPTKPTPKTPPKPPVKQ) form a disordered region. Pro residues predominate over residues 1431-1444 (KPTPKTPPKPPVKQ).

Belongs to the adhesin P1 family.

It localises to the cell membrane. The protein is the major adhesin mediating the attachment of this mycoplasma to the ciliated epithelium. This chain is Adhesin P1 (mgpA), found in Mycoplasma genitalium (strain ATCC 33530 / DSM 19775 / NCTC 10195 / G37) (Mycoplasmoides genitalium).